A 2784-amino-acid chain; its full sequence is Cilia- and flagella-associated protein 46 (2784 aa).

One copy of the TPR 1 repeat lies at 129 to 162 (GLEVAAANQPRYQFLVYNASVHHWRVVAPLHRDG). Positions 242 to 268 (TAAAAKLTELQKDVARLQVHLATLAAA) form a coiled coil. The TPR 2 repeat unit spans residues 401–434 (SLAPVVVAAHVKALEQLEDVLTTFTKLADVEGIH). Disordered regions lie at residues 543–562 (SAEPANPEEEAVSLIERSKE) and 581–607 (RDLPHPPPPAPTDPPGPDRDAAHAAAR). Positions 585 to 595 (HPPPPAPTDPP) are enriched in pro residues. Residues 644–665 (AVDREMVLLQAQLAHYEAEAAI) adopt a coiled-coil conformation. The disordered stretch occupies residues 670 to 697 (RRRADISPPTRPSPPEVDGEGVRQPPAT). The TPR 3 repeat unit spans residues 708–743 (ASVRSMRGAMSVNEPWLTLNNAVQLYNAALPLMQQH). Disordered stretches follow at residues 799-837 (DAGQELEDDDDEDSLDEDGNPPPAGDAGPHFNRRSPAYK) and 929-954 (RVNEEKQPAGAGAEKGGGDKGRKPHG). A compositionally biased stretch (acidic residues) spans 802–817 (QELEDDDDEDSLDEDG). The stretch at 976-1009 (LELWAKMARAVADAGVWPAALECSAAALAALPGA) is one TPR 4 repeat. Residues 1275–1288 (TGDLDGDGTDDEDD) show a composition bias toward acidic residues. 2 disordered regions span residues 1275-1351 (TGDL…RVPE) and 1640-1673 (AAGGGRGGRESPSPHDDGIHYIGGPAPGDSHGQL). The segment covering 1298–1311 (SGGGSSSGRAGGGF) has biased composition (gly residues). Over residues 1646–1658 (GGRESPSPHDDGI) the composition is skewed to basic and acidic residues. 2 TPR repeats span residues 1712-1745 (HDVWLKKGDYLLRRGHYAAARQLLSRARAHAADC) and 1854-1886 (MEMLRGQGVSTWRKSYDGAVTLVNQAIMALAAR). A coiled-coil region spans residues 1961 to 1984 (RLAEVQLAAAEERERLAGADREKA). Disordered regions lie at residues 2068-2112 (RPFV…EAAA), 2278-2303 (ATAEPTPPLNAEKSKKKTDASAPAAA), 2346-2389 (AAKG…PGAA), and 2441-2465 (LPLPPPGSPDGKKEKKDKKEAAGPT). The span at 2069 to 2083 (PFVPPPKPPGAPKRP) shows a compositional bias: pro residues. Positions 2087-2096 (AEEEEDEEGP) are enriched in acidic residues. The span at 2097 to 2112 (DTAAADAAAEAAEAAA) shows a compositional bias: low complexity. Low complexity predominate over residues 2378-2389 (SKQGPKSGPGAA). The span at 2450–2461 (DGKKEKKDKKEA) shows a compositional bias: basic and acidic residues. The TPR 7 repeat unit spans residues 2613 to 2646 (ATGGPCTGLLFLGVGRFAAHVPPAVLASAPLGGC).

It belongs to the CFAP46 family. As to quaternary structure, part of the PDCP1 complex composed of CFAP46, CFAP54, CFAP74 and CFAP221; the PDCP1 complex binds calmodulin.

The protein resides in the cytoplasm. Its subcellular location is the cytoskeleton. It localises to the cilium axoneme. Functionally, as part of the central apparatus of the cilium axoneme plays a role in cilium movement and thereby cell motility. The sequence is that of Cilia- and flagella-associated protein 46 from Chlamydomonas reinhardtii (Chlamydomonas smithii).